The sequence spans 384 residues: Probable tRNA sulfurtransferase (384 aa).

The 104-residue stretch at glutamate 57–isoleucine 160 folds into the THUMP domain. ATP contacts are provided by residues methionine 177–leucine 178, tyrosine 202–phenylalanine 203, arginine 259, glycine 281, and glutamine 290.

Belongs to the ThiI family.

The protein localises to the cytoplasm. The catalysed reaction is [ThiI sulfur-carrier protein]-S-sulfanyl-L-cysteine + a uridine in tRNA + 2 reduced [2Fe-2S]-[ferredoxin] + ATP + H(+) = [ThiI sulfur-carrier protein]-L-cysteine + a 4-thiouridine in tRNA + 2 oxidized [2Fe-2S]-[ferredoxin] + AMP + diphosphate. It carries out the reaction [ThiS sulfur-carrier protein]-C-terminal Gly-Gly-AMP + S-sulfanyl-L-cysteinyl-[cysteine desulfurase] + AH2 = [ThiS sulfur-carrier protein]-C-terminal-Gly-aminoethanethioate + L-cysteinyl-[cysteine desulfurase] + A + AMP + 2 H(+). The protein operates within cofactor biosynthesis; thiamine diphosphate biosynthesis. Its function is as follows. Catalyzes the ATP-dependent transfer of a sulfur to tRNA to produce 4-thiouridine in position 8 of tRNAs, which functions as a near-UV photosensor. Also catalyzes the transfer of sulfur to the sulfur carrier protein ThiS, forming ThiS-thiocarboxylate. This is a step in the synthesis of thiazole, in the thiamine biosynthesis pathway. The sulfur is donated as persulfide by IscS. This chain is Probable tRNA sulfurtransferase, found in Clostridium acetobutylicum (strain ATCC 824 / DSM 792 / JCM 1419 / IAM 19013 / LMG 5710 / NBRC 13948 / NRRL B-527 / VKM B-1787 / 2291 / W).